The primary structure comprises 227 residues: 2-C-methyl-D-erythritol 4-phosphate cytidylyltransferase (227 aa).

It belongs to the IspD/TarI cytidylyltransferase family. IspD subfamily.

It carries out the reaction 2-C-methyl-D-erythritol 4-phosphate + CTP + H(+) = 4-CDP-2-C-methyl-D-erythritol + diphosphate. Its pathway is isoprenoid biosynthesis; isopentenyl diphosphate biosynthesis via DXP pathway; isopentenyl diphosphate from 1-deoxy-D-xylulose 5-phosphate: step 2/6. Functionally, catalyzes the formation of 4-diphosphocytidyl-2-C-methyl-D-erythritol from CTP and 2-C-methyl-D-erythritol 4-phosphate (MEP). This is 2-C-methyl-D-erythritol 4-phosphate cytidylyltransferase from Tolumonas auensis (strain DSM 9187 / NBRC 110442 / TA 4).